The following is a 160-amino-acid chain: Phosphopantetheine adenylyltransferase (160 aa).

Ser-8 is a binding site for substrate. ATP contacts are provided by residues 8 to 9 (SF) and His-16. Substrate contacts are provided by Lys-40, Leu-74, and Lys-88. Residues 89–91 (GLR), Glu-99, and 124–130 (YSFVSST) contribute to the ATP site.

This sequence belongs to the bacterial CoaD family. In terms of assembly, homohexamer. The cofactor is Mg(2+).

It is found in the cytoplasm. It catalyses the reaction (R)-4'-phosphopantetheine + ATP + H(+) = 3'-dephospho-CoA + diphosphate. The protein operates within cofactor biosynthesis; coenzyme A biosynthesis; CoA from (R)-pantothenate: step 4/5. Reversibly transfers an adenylyl group from ATP to 4'-phosphopantetheine, yielding dephospho-CoA (dPCoA) and pyrophosphate. The sequence is that of Phosphopantetheine adenylyltransferase from Thermus thermophilus (strain ATCC BAA-163 / DSM 7039 / HB27).